A 160-amino-acid polypeptide reads, in one-letter code: Vesicle transport protein SFT2B (160 aa).

Methionine 1 is modified (N-acetylmethionine). Residues 1–36 are Cytoplasmic-facing; it reads MDKLKKVLSGQDTEDRSGLSEVVEASSLSWSTRIKG. Position 9 is a phosphoserine (serine 9). Residues 37-57 form a helical membrane-spanning segment; the sequence is FIACFAIGILCSLLGTVLLWV. The Lumenal segment spans residues 58-63; sequence PRKGLH. Residues 64 to 84 traverse the membrane as a helical segment; that stretch reads LFAVFYTFGNIASIGSTIFLM. Topologically, residues 85 to 98 are cytoplasmic; that stretch reads GPVKQLKRMFEPTR. A helical transmembrane segment spans residues 99 to 119; that stretch reads LIATIMVLLCFALTLCSAFWW. The Lumenal portion of the chain corresponds to 120–123; that stretch reads HNKG. The helical transmembrane segment at 124–144 threads the bilayer; that stretch reads LALIFCILQSLALTWYSLSFI. Residues 145–160 lie on the Cytoplasmic side of the membrane; sequence PFARDAVKKCFAVCLA.

It belongs to the SFT2 family.

The protein localises to the membrane. In terms of biological role, may be involved in fusion of retrograde transport vesicles derived from an endocytic compartment with the Golgi complex. The polypeptide is Vesicle transport protein SFT2B (Homo sapiens (Human)).